A 159-amino-acid chain; its full sequence is Putative 4-hydroxy-4-methyl-2-oxoglutarate aldolase (159 aa).

Substrate contacts are provided by residues 78–81 (GDVI) and Arg-100. An a divalent metal cation-binding site is contributed by Asp-101.

The protein belongs to the class II aldolase/RraA-like family. In terms of assembly, homotrimer. A divalent metal cation is required as a cofactor.

The catalysed reaction is 4-hydroxy-4-methyl-2-oxoglutarate = 2 pyruvate. It carries out the reaction oxaloacetate + H(+) = pyruvate + CO2. Functionally, catalyzes the aldol cleavage of 4-hydroxy-4-methyl-2-oxoglutarate (HMG) into 2 molecules of pyruvate. Also contains a secondary oxaloacetate (OAA) decarboxylase activity due to the common pyruvate enolate transition state formed following C-C bond cleavage in the retro-aldol and decarboxylation reactions. In Mycobacterium sp. (strain JLS), this protein is Putative 4-hydroxy-4-methyl-2-oxoglutarate aldolase.